The chain runs to 76 residues: Omega-conotoxin-like TxMKLT1-0211 (76 aa).

Positions 1-22 are cleaved as a signal peptide; that stretch reads MKLTCMMIVAVLFLTAWTFVTA. The propeptide occupies 23–52; that stretch reads VPHSSNALENLYLKAHHEMNNPEDSELNKR. Disulfide bonds link Cys53–Cys67, Cys60–Cys71, and Cys66–Cys75.

It belongs to the conotoxin O1 superfamily. In terms of tissue distribution, expressed by the venom duct.

The protein localises to the secreted. In terms of biological role, omega-conotoxins act at presynaptic membranes, they bind and block voltage-gated calcium channels (Cav). This is Omega-conotoxin-like TxMKLT1-0211 from Conus textile (Cloth-of-gold cone).